Here is a 341-residue protein sequence, read N- to C-terminus: RNA 3'-terminal phosphate cyclase (341 aa).

ATP is bound by residues Gln102 and 283–287; that span reads HLADQ. His308 acts as the Tele-AMP-histidine intermediate in catalysis.

Belongs to the RNA 3'-terminal cyclase family. Type 1 subfamily.

The protein resides in the cytoplasm. It catalyses the reaction a 3'-end 3'-phospho-ribonucleotide-RNA + ATP = a 3'-end 2',3'-cyclophospho-ribonucleotide-RNA + AMP + diphosphate. Its function is as follows. Catalyzes the conversion of 3'-phosphate to a 2',3'-cyclic phosphodiester at the end of RNA. The mechanism of action of the enzyme occurs in 3 steps: (A) adenylation of the enzyme by ATP; (B) transfer of adenylate to an RNA-N3'P to produce RNA-N3'PP5'A; (C) and attack of the adjacent 2'-hydroxyl on the 3'-phosphorus in the diester linkage to produce the cyclic end product. The biological role of this enzyme is unknown but it is likely to function in some aspects of cellular RNA processing. The polypeptide is RNA 3'-terminal phosphate cyclase (Pseudomonas aeruginosa (strain LESB58)).